Here is a 404-residue protein sequence, read N- to C-terminus: Cysteine desulfurase IscS (404 aa).

Residues 75–76, Asn-155, Gln-183, and 203–205 each bind pyridoxal 5'-phosphate; these read AT and SGH. At Lys-206 the chain carries N6-(pyridoxal phosphate)lysine. Thr-243 is a binding site for pyridoxal 5'-phosphate. Catalysis depends on Cys-328, which acts as the Cysteine persulfide intermediate. [2Fe-2S] cluster is bound at residue Cys-328.

This sequence belongs to the class-V pyridoxal-phosphate-dependent aminotransferase family. NifS/IscS subfamily. In terms of assembly, homodimer. Forms a heterotetramer with IscU, interacts with other sulfur acceptors. Pyridoxal 5'-phosphate serves as cofactor.

The protein localises to the cytoplasm. The enzyme catalyses (sulfur carrier)-H + L-cysteine = (sulfur carrier)-SH + L-alanine. It functions in the pathway cofactor biosynthesis; iron-sulfur cluster biosynthesis. In terms of biological role, master enzyme that delivers sulfur to a number of partners involved in Fe-S cluster assembly, tRNA modification or cofactor biosynthesis. Catalyzes the removal of elemental sulfur atoms from cysteine to produce alanine. Functions as a sulfur delivery protein for Fe-S cluster synthesis onto IscU, an Fe-S scaffold assembly protein, as well as other S acceptor proteins. This is Cysteine desulfurase IscS from Serratia proteamaculans (strain 568).